Reading from the N-terminus, the 227-residue chain is Ribosomal RNA large subunit methyltransferase E (227 aa).

Positions 78, 80, 103, 119, and 143 each coordinate S-adenosyl-L-methionine. The active-site Proton acceptor is K183.

This sequence belongs to the class I-like SAM-binding methyltransferase superfamily. RNA methyltransferase RlmE family.

The protein localises to the cytoplasm. It carries out the reaction uridine(2552) in 23S rRNA + S-adenosyl-L-methionine = 2'-O-methyluridine(2552) in 23S rRNA + S-adenosyl-L-homocysteine + H(+). Specifically methylates the uridine in position 2552 of 23S rRNA at the 2'-O position of the ribose in the fully assembled 50S ribosomal subunit. This chain is Ribosomal RNA large subunit methyltransferase E, found in Rickettsia akari (strain Hartford).